We begin with the raw amino-acid sequence, 837 residues long: Putative dimethyl sulfoxide reductase catalytic subunit A (837 aa).

Positions 1 to 36 (MSDTDLNATRRDVLKSGAVAAVGLSGGGLLSTLQEA) form a signal peptide, tat-type signal. The 4Fe-4S Mo/W bis-MGD-type domain occupies 53–110 (DQVVKTACSPNCRGKCPLDVFVRDGQIKKVEQQVPAAKTFKRGCTLGMTHLQRVYNAD). The [4Fe-4S] cluster site is built by cysteine 60, cysteine 64, cysteine 68, and cysteine 96. Residue asparagine 200 participates in Mo-bis(molybdopterin guanine dinucleotide) binding. The disordered stretch occupies residues 813–837 (EHQSNEYTQHNPRGSSGTATDGDSS). The span at 826–837 (GSSGTATDGDSS) shows a compositional bias: low complexity.

It belongs to the prokaryotic molybdopterin-containing oxidoreductase family. As to quaternary structure, probable multiprotein complex that likely consists of DmsA, DmsB and DmsC. The cofactor is Mo-bis(molybdopterin guanine dinucleotide). [4Fe-4S] cluster serves as cofactor. In terms of processing, predicted to be exported by the Tat system. The position of the signal peptide cleavage has not been experimentally proven.

The protein localises to the cell membrane. The catalysed reaction is dimethyl sulfide + a menaquinone + H2O = dimethyl sulfoxide + a menaquinol. Dimethyl sulfoxide (DMSO) reductase catalyzes the reduction of dimethyl sulfoxide (DMSO) to dimethyl sulfide (DMS) during anaerobic respiration; it can also use trimethylamine N-oxide (TMAO) as terminal electron acceptor. Required for anaerobic respiration on DMSO and TMAO; subunit A is proposed to be catalytically active. This is Putative dimethyl sulfoxide reductase catalytic subunit A (dmsA) from Halobacterium salinarum (strain ATCC 700922 / JCM 11081 / NRC-1) (Halobacterium halobium).